Reading from the N-terminus, the 193-residue chain is Hypoxanthine/guanine phosphoribosyltransferase (193 aa).

The protein belongs to the purine/pyrimidine phosphoribosyltransferase family. Archaeal HPRT subfamily. Homodimer.

It is found in the cytoplasm. It carries out the reaction IMP + diphosphate = hypoxanthine + 5-phospho-alpha-D-ribose 1-diphosphate. The catalysed reaction is GMP + diphosphate = guanine + 5-phospho-alpha-D-ribose 1-diphosphate. The protein operates within purine metabolism; IMP biosynthesis via salvage pathway; IMP from hypoxanthine: step 1/1. In terms of biological role, catalyzes a salvage reaction resulting in the formation of IMP that is energically less costly than de novo synthesis. Prefers hypoxanthine, has 66% activity with guanine while activity with adenine, xanthine, uracil, orotate, or cytosine is negligible. This Methanothermobacter marburgensis (strain ATCC BAA-927 / DSM 2133 / JCM 14651 / NBRC 100331 / OCM 82 / Marburg) (Methanobacterium thermoautotrophicum) protein is Hypoxanthine/guanine phosphoribosyltransferase.